Here is a 181-residue protein sequence, read N- to C-terminus: HGPRTase-like protein 2 (181 aa).

It belongs to the purine/pyrimidine phosphoribosyltransferase family. Archaeal HPRT subfamily.

Functionally, may catalyze a purine salvage reaction, the substrate is unknown. This Natrialba magadii (strain ATCC 43099 / DSM 3394 / CCM 3739 / CIP 104546 / IAM 13178 / JCM 8861 / NBRC 102185 / NCIMB 2190 / MS3) (Natronobacterium magadii) protein is HGPRTase-like protein 2.